The sequence spans 486 residues: Shugoshin-1 (486 aa).

Positions 71–154 (IEVSRVELQK…QNRAKILEKK (84 aa)) form a coiled coil. Disordered stretches follow at residues 137-163 (MSKT…CAPT), 187-209 (YTSC…RKSE), 222-251 (HSCR…ARLN), 323-346 (AGSS…PRKS), 382-403 (PIQH…DPGP), and 418-467 (TVAP…SRRA). Positions 331 to 346 (EAHKFDIEDPEPPRKS) are enriched in basic and acidic residues. The segment covering 387 to 396 (QKRKLSRRKS) has biased composition (basic residues). A compositionally biased stretch (polar residues) spans 423-433 (APSSSNALIEQ).

It belongs to the shugoshin family. In terms of tissue distribution, highly expressed in roots. Expressed in panicles. Expressed at low levels in leaves.

It is found in the nucleus. The protein localises to the nucleolus. The protein resides in the chromosome. Its subcellular location is the centromere. Plays a central role in chromosome cohesion during meiosis I by preventing premature dissociation of cohesin complex from centromeres after prophase, when most of cohesin complex dissociates from chromosomes arms. Required for the timely assembly and maintenance of synaptonemal complex (SC) during early prophase I. Required for maintenance of centromeric cohesion before prophase II and correct segregation of chromatids during meiosis II. Has apparently no function in mitosis. The sequence is that of Shugoshin-1 from Oryza sativa subsp. japonica (Rice).